The sequence spans 164 residues: Phosphopantetheine adenylyltransferase (164 aa).

Serine 9 is a substrate binding site. ATP is bound by residues 9 to 10 (SF) and histidine 17. Substrate is bound by residues lysine 41, leucine 73, and arginine 87. Residues glutamate 98 and 122-128 (YSFLSSS) each bind ATP.

Belongs to the bacterial CoaD family. In terms of assembly, homohexamer. The cofactor is Mg(2+).

It is found in the cytoplasm. The enzyme catalyses (R)-4'-phosphopantetheine + ATP + H(+) = 3'-dephospho-CoA + diphosphate. The protein operates within cofactor biosynthesis; coenzyme A biosynthesis; CoA from (R)-pantothenate: step 4/5. Its function is as follows. Reversibly transfers an adenylyl group from ATP to 4'-phosphopantetheine, yielding dephospho-CoA (dPCoA) and pyrophosphate. The protein is Phosphopantetheine adenylyltransferase of Thermobifida fusca (strain YX).